We begin with the raw amino-acid sequence, 249 residues long: 2,3-bisphosphoglycerate-dependent phosphoglycerate mutase (249 aa).

Substrate contacts are provided by residues 8–15 (RHGESVWN), 21–22 (TG), Arg-60, 87–90 (ERHY), Lys-98, 114–115 (RR), and 183–184 (GN). His-9 acts as the Tele-phosphohistidine intermediate in catalysis. Glu-87 acts as the Proton donor/acceptor in catalysis.

Belongs to the phosphoglycerate mutase family. BPG-dependent PGAM subfamily.

The enzyme catalyses (2R)-2-phosphoglycerate = (2R)-3-phosphoglycerate. Its pathway is carbohydrate degradation; glycolysis; pyruvate from D-glyceraldehyde 3-phosphate: step 3/5. In terms of biological role, catalyzes the interconversion of 2-phosphoglycerate and 3-phosphoglycerate. The protein is 2,3-bisphosphoglycerate-dependent phosphoglycerate mutase of Endomicrobium trichonymphae.